The sequence spans 166 residues: Small ribosomal subunit protein uS5 (166 aa).

The 64-residue stretch at 12 to 75 (YIEKLVQVNR…EAARRNMIQV (64 aa)) folds into the S5 DRBM domain.

The protein belongs to the universal ribosomal protein uS5 family. Part of the 30S ribosomal subunit. Contacts proteins S4 and S8.

Functionally, with S4 and S12 plays an important role in translational accuracy. Located at the back of the 30S subunit body where it stabilizes the conformation of the head with respect to the body. The sequence is that of Small ribosomal subunit protein uS5 from Pseudomonas fluorescens (strain Pf0-1).